The chain runs to 300 residues: 33 kDa chaperonin (300 aa).

Intrachain disulfides connect C235-C237 and C269-C272.

The protein belongs to the HSP33 family. In terms of processing, under oxidizing conditions two disulfide bonds are formed involving the reactive cysteines. Under reducing conditions zinc is bound to the reactive cysteines and the protein is inactive.

Its subcellular location is the cytoplasm. Its function is as follows. Redox regulated molecular chaperone. Protects both thermally unfolding and oxidatively damaged proteins from irreversible aggregation. Plays an important role in the bacterial defense system toward oxidative stress. This Pseudomonas fluorescens (strain Pf0-1) protein is 33 kDa chaperonin.